The chain runs to 120 residues: MTTTPTDRKYAASHEWLTQDGTVGISDHAQEQLGDVVYVELPEVGREVKAGEAVAVVESVKTASDIYAPASGTITAVNDELSGSPEKVNESPYEGGWLFKLDVTEEGDLLDAAAYEAQAN.

Positions 20-102 constitute a Lipoyl-binding domain; it reads DGTVGISDHA…YEGGWLFKLD (83 aa). Lys-61 carries the N6-lipoyllysine modification.

It belongs to the GcvH family. In terms of assembly, the glycine cleavage system is composed of four proteins: P, T, L and H. (R)-lipoate serves as cofactor.

The glycine cleavage system catalyzes the degradation of glycine. The H protein shuttles the methylamine group of glycine from the P protein to the T protein. This is Glycine cleavage system H protein from Deinococcus radiodurans (strain ATCC 13939 / DSM 20539 / JCM 16871 / CCUG 27074 / LMG 4051 / NBRC 15346 / NCIMB 9279 / VKM B-1422 / R1).